Reading from the N-terminus, the 621-residue chain is Chaperone protein HtpG (621 aa).

The interval 1-341 is a; substrate-binding; that stretch reads MSNQEYTFQT…SEDLPLNVSR (341 aa). The segment at 342-547 is b; that stretch reads EILQQNKILA…GDEQNAMMAN (206 aa). A c region spans residues 548-621; the sequence is LMRQMGQNMP…RLNSVLLKAL (74 aa).

This sequence belongs to the heat shock protein 90 family. In terms of assembly, homodimer.

It is found in the cytoplasm. Functionally, molecular chaperone. Has ATPase activity. This is Chaperone protein HtpG from Helicobacter acinonychis (strain Sheeba).